Reading from the N-terminus, the 250-residue chain is Hydroxyethylthiazole kinase (250 aa).

Substrate is bound at residue methionine 39. Residues arginine 114 and threonine 159 each contribute to the ATP site. Glycine 186 provides a ligand contact to substrate.

Belongs to the Thz kinase family. The cofactor is Mg(2+).

The enzyme catalyses 5-(2-hydroxyethyl)-4-methylthiazole + ATP = 4-methyl-5-(2-phosphooxyethyl)-thiazole + ADP + H(+). The protein operates within cofactor biosynthesis; thiamine diphosphate biosynthesis; 4-methyl-5-(2-phosphoethyl)-thiazole from 5-(2-hydroxyethyl)-4-methylthiazole: step 1/1. Its function is as follows. Catalyzes the phosphorylation of the hydroxyl group of 4-methyl-5-beta-hydroxyethylthiazole (THZ). This Lactococcus lactis subsp. cremoris (strain SK11) protein is Hydroxyethylthiazole kinase.